Reading from the N-terminus, the 240-residue chain is Aspartate/glutamate leucyltransferase (240 aa).

This sequence belongs to the R-transferase family. Bpt subfamily.

Its subcellular location is the cytoplasm. The catalysed reaction is N-terminal L-glutamyl-[protein] + L-leucyl-tRNA(Leu) = N-terminal L-leucyl-L-glutamyl-[protein] + tRNA(Leu) + H(+). It catalyses the reaction N-terminal L-aspartyl-[protein] + L-leucyl-tRNA(Leu) = N-terminal L-leucyl-L-aspartyl-[protein] + tRNA(Leu) + H(+). In terms of biological role, functions in the N-end rule pathway of protein degradation where it conjugates Leu from its aminoacyl-tRNA to the N-termini of proteins containing an N-terminal aspartate or glutamate. The chain is Aspartate/glutamate leucyltransferase from Thiobacillus denitrificans (strain ATCC 25259 / T1).